Consider the following 356-residue polypeptide: Tyrosine recombinase XerS (356 aa).

A Core-binding (CB) domain is found at 16-121 (LMPWFVLEYY…ALSSLYKYLT (106 aa)). The Tyr recombinase domain occupies 169–354 (KFLDYVENEY…VNDEQKNALD (186 aa)). Catalysis depends on residues R210, K234, H306, R309, and H332. The active-site O-(3'-phospho-DNA)-tyrosine intermediate is the Y341.

It belongs to the 'phage' integrase family. XerS subfamily.

Its subcellular location is the cytoplasm. With respect to regulation, ftsK is required for recombination. Functionally, site-specific tyrosine recombinase, which acts by catalyzing the cutting and rejoining of the recombining DNA molecules. Essential to convert dimers of the bacterial chromosome into monomers to permit their segregation at cell division. The protein is Tyrosine recombinase XerS of Streptococcus thermophilus (strain CNRZ 1066).